We begin with the raw amino-acid sequence, 220 residues long: Putative respiratory nitrate reductase subunit Rieske (220 aa).

Residues 118–206 form the Rieske domain; it reads KAPTLLVRHA…ITVSSEGYLI (89 aa). [2Fe-2S] cluster contacts are provided by C151, H153, C168, and H171. The cysteines at positions 156 and 170 are disulfide-linked.

In terms of assembly, probable multiprotein complex; a catalytic heterodimer of an alpha and beta chain is proposed to associate with additional subunits involved in membrane attachment and electron transfer. [2Fe-2S] cluster serves as cofactor.

It is found in the cell membrane. The respiratory membrane-bound nitrate reductase enzyme complex plays a role in generation of metabolic energy by using nitrate as a terminal electron acceptor during anaerobic conditions. Proposed Rieske subunit involved in a protonmotive Q-cycle mechanism-based electron transfer electrons to the beta subunit. The sequence is that of Putative respiratory nitrate reductase subunit Rieske (narB) from Haloferax mediterranei (strain ATCC 33500 / DSM 1411 / JCM 8866 / NBRC 14739 / NCIMB 2177 / R-4) (Halobacterium mediterranei).